Consider the following 378-residue polypeptide: Queuine tRNA-ribosyltransferase (378 aa).

D91 acts as the Proton acceptor in catalysis. Substrate contacts are provided by residues 91–95 (DSGGF), D145, Q189, and G216. An RNA binding region spans residues 247-253 (GVGKPED). D266 acts as the Nucleophile in catalysis. An RNA binding; important for wobble base 34 recognition region spans residues 271 to 275 (TRNAR). Zn(2+)-binding residues include C304, C306, C309, and H335.

The protein belongs to the queuine tRNA-ribosyltransferase family. Homodimer. Within each dimer, one monomer is responsible for RNA recognition and catalysis, while the other monomer binds to the replacement base PreQ1. Requires Zn(2+) as cofactor.

It carries out the reaction 7-aminomethyl-7-carbaguanine + guanosine(34) in tRNA = 7-aminomethyl-7-carbaguanosine(34) in tRNA + guanine. Its pathway is tRNA modification; tRNA-queuosine biosynthesis. Functionally, catalyzes the base-exchange of a guanine (G) residue with the queuine precursor 7-aminomethyl-7-deazaguanine (PreQ1) at position 34 (anticodon wobble position) in tRNAs with GU(N) anticodons (tRNA-Asp, -Asn, -His and -Tyr). Catalysis occurs through a double-displacement mechanism. The nucleophile active site attacks the C1' of nucleotide 34 to detach the guanine base from the RNA, forming a covalent enzyme-RNA intermediate. The proton acceptor active site deprotonates the incoming PreQ1, allowing a nucleophilic attack on the C1' of the ribose to form the product. After dissociation, two additional enzymatic reactions on the tRNA convert PreQ1 to queuine (Q), resulting in the hypermodified nucleoside queuosine (7-(((4,5-cis-dihydroxy-2-cyclopenten-1-yl)amino)methyl)-7-deazaguanosine). The sequence is that of Queuine tRNA-ribosyltransferase from Vibrio campbellii (strain ATCC BAA-1116).